The sequence spans 151 residues: MDNIVDSLNKAYEKFVLASAGVLESKESAGGQKALLTDTALENFKEKWELFRVACDQAEEFVESVKQRIGSECLVDEATGLTTTAAGGQAPAAVTGAATSLPPISAVRLEQMSRAVRWLVLELQRGSGVAPGSVHSSSTGFDSRFSEDSTQ.

A disordered region spans residues 128–151 (GVAPGSVHSSSTGFDSRFSEDSTQ).

Belongs to the mediator complex subunit 32 family. Oligomers. Component of the Mediator complex. Interacts with MED6. Interacts with GEBPL.

Its subcellular location is the nucleus. Functionally, component of the Mediator complex, a coactivator involved in the regulated transcription of nearly all RNA polymerase II-dependent genes. Mediator functions as a bridge to convey information from gene-specific regulatory proteins to the basal RNA polymerase II transcription machinery. The Mediator complex, having a compact conformation in its free form, is recruited to promoters by direct interactions with regulatory proteins and serves for the assembly of a functional pre-initiation complex with RNA polymerase II and the general transcription factors. This Arabidopsis thaliana (Mouse-ear cress) protein is Mediator of RNA polymerase II transcription subunit 32 (MED32).